We begin with the raw amino-acid sequence, 351 residues long: Methionine import ATP-binding protein MetN (351 aa).

An ABC transporter domain is found at isoleucine 2 to valine 241. Position 38 to 45 (glycine 38 to serine 45) interacts with ATP.

The protein belongs to the ABC transporter superfamily. Methionine importer (TC 3.A.1.24) family. The complex is composed of two ATP-binding proteins (MetN), two transmembrane proteins (MetI) and a solute-binding protein (MetQ).

The protein localises to the cell inner membrane. The catalysed reaction is L-methionine(out) + ATP + H2O = L-methionine(in) + ADP + phosphate + H(+). The enzyme catalyses D-methionine(out) + ATP + H2O = D-methionine(in) + ADP + phosphate + H(+). In terms of biological role, part of the ABC transporter complex MetNIQ involved in methionine import. Responsible for energy coupling to the transport system. In Rhodospirillum rubrum (strain ATCC 11170 / ATH 1.1.1 / DSM 467 / LMG 4362 / NCIMB 8255 / S1), this protein is Methionine import ATP-binding protein MetN.